The primary structure comprises 504 residues: Glycerol kinase (504 aa).

Thr-14 serves as a coordination point for ADP. Thr-14, Thr-15, and Ser-16 together coordinate ATP. Sn-glycerol 3-phosphate is bound at residue Thr-14. Residue Arg-18 coordinates ADP. Residues Arg-84, Glu-85, and Tyr-136 each coordinate sn-glycerol 3-phosphate. Glycerol is bound by residues Arg-84, Glu-85, and Tyr-136. His-232 bears the Phosphohistidine; by HPr mark. Asp-246 contributes to the sn-glycerol 3-phosphate binding site. The glycerol site is built by Asp-246 and Gln-247. 2 residues coordinate ADP: Thr-268 and Gly-311. 4 residues coordinate ATP: Thr-268, Gly-311, Gln-315, and Gly-412. 2 residues coordinate ADP: Gly-412 and Asn-416.

Belongs to the FGGY kinase family. In terms of assembly, homotetramer and homodimer (in equilibrium). In terms of processing, the phosphoenolpyruvate-dependent sugar phosphotransferase system (PTS), including enzyme I, and histidine-containing protein (HPr) are required for the phosphorylation, which leads to the activation of the enzyme.

It carries out the reaction glycerol + ATP = sn-glycerol 3-phosphate + ADP + H(+). The protein operates within polyol metabolism; glycerol degradation via glycerol kinase pathway; sn-glycerol 3-phosphate from glycerol: step 1/1. With respect to regulation, activated by phosphorylation and inhibited by fructose 1,6-bisphosphate (FBP). Its function is as follows. Key enzyme in the regulation of glycerol uptake and metabolism. Catalyzes the phosphorylation of glycerol to yield sn-glycerol 3-phosphate. The sequence is that of Glycerol kinase from Streptococcus pyogenes serotype M6 (strain ATCC BAA-946 / MGAS10394).